A 91-amino-acid chain; its full sequence is UPF0298 protein M28_Spy0318 (91 aa).

It belongs to the UPF0298 family.

The protein localises to the cytoplasm. This is UPF0298 protein M28_Spy0318 from Streptococcus pyogenes serotype M28 (strain MGAS6180).